The sequence spans 368 residues: uncharacterized protein (368 aa).

In terms of domain architecture, Response regulatory spans 3 to 120 (KILLADDERI…QIISSLEEII (118 aa)). Aspartate 55 carries the 4-aspartylphosphate modification. Residues 259-361 (SKMIRLIADE…GLTPSEFRRK (103 aa)) enclose the HTH araC/xylS-type domain. 2 DNA-binding regions (H-T-H motif) span residues 278-299 (WAAKDMLFMNPDYLGKLFKQET) and 327-351 (VSEIAEEIGFGDNPKYFSLVFKKYT).

In terms of processing, phosphorylated by YesM.

The protein resides in the cytoplasm. Functionally, member of the two-component regulatory system YesM/YesN. This is an uncharacterized protein from Bacillus subtilis (strain 168).